Here is a 326-residue protein sequence, read N- to C-terminus: Tetraacyldisaccharide 4'-kinase (326 aa).

53–60 contributes to the ATP binding site; sequence SVGGNGKT.

Belongs to the LpxK family.

The enzyme catalyses a lipid A disaccharide + ATP = a lipid IVA + ADP + H(+). The protein operates within glycolipid biosynthesis; lipid IV(A) biosynthesis; lipid IV(A) from (3R)-3-hydroxytetradecanoyl-[acyl-carrier-protein] and UDP-N-acetyl-alpha-D-glucosamine: step 6/6. Transfers the gamma-phosphate of ATP to the 4'-position of a tetraacyldisaccharide 1-phosphate intermediate (termed DS-1-P) to form tetraacyldisaccharide 1,4'-bis-phosphate (lipid IVA). This Actinobacillus pleuropneumoniae serotype 7 (strain AP76) protein is Tetraacyldisaccharide 4'-kinase.